The sequence spans 539 residues: Diacylglycerol O-acyltransferase 1 (539 aa).

Residues 1 to 104 (MAISDMPEST…NDGGEKIANG (104 aa)) form a disordered region. Positions 33–52 (TETTEVSDSNSKTTDPDSGN) are enriched in polar residues. A compositionally biased stretch (basic and acidic residues) spans 56–80 (ESVRVRDSSTDESLARKSCEDDGSR). 7 consecutive transmembrane segments (helical) span residues 143 to 163 (HAGLFNLCIVVLVAVNSRLII), 187 to 207 (WPLLMCCLTLPIFPAAAFVVE), 219 to 239 (VVLLLHFIITTAALLYPVFVI), 244 to 264 (SVVLSGVTLMLFACIVWLKLV), 294 to 314 (YPYSVSFKSLAYFMVAPTLCY), 334 to 354 (VKLIIFTGVMGFIIEQYINPI), and 383 to 403 (VWLCMFYCFFHLWLNILAELL). Residues 410-416 (FYKDWWN) carry the FYXDWWN motif motif. The next 3 membrane-spanning stretches (helical) occupy residues 451–471 (GVAILIAFFVSAIFHELCIAV), 473–493 (CHIFKLWAFIGIMCQVPLVLI), and 506–526 (VGNMIFWFFFCILGQPMCVLL). The active site involves histidine 465.

Belongs to the membrane-bound acyltransferase family. Sterol o-acyltransferase subfamily.

The protein localises to the endoplasmic reticulum membrane. It carries out the reaction an acyl-CoA + a 1,2-diacyl-sn-glycerol = a triacyl-sn-glycerol + CoA. It functions in the pathway glycerolipid metabolism; triacylglycerol biosynthesis. In terms of biological role, major contributor to triacylglycerol (TAG) synthesis and oil accumulation in developing seeds. Catalyzes the acylation of the sn-3 hydroxy group of sn-1,2-diacylglycerol using acyl-CoA. Has a marked preference for oleoyl-CoA as substrate. The polypeptide is Diacylglycerol O-acyltransferase 1 (Corylus americana (American hazelnut)).